The chain runs to 274 residues: Probable lipoprotein peptidase YaeF (274 aa).

An N-terminal signal peptide occupies residues 1–20 (MDKPKAYCRLFLPSFLLLSA). C21 carries N-palmitoyl cysteine lipidation. C21 is lipidated: S-diacylglycerol cysteine. The active-site Nucleophile is C207. Catalysis depends on H257, which acts as the Proton acceptor.

The protein localises to the cell inner membrane. This chain is Probable lipoprotein peptidase YaeF (yaeF), found in Escherichia coli (strain K12).